A 209-amino-acid polypeptide reads, in one-letter code: Large ribosomal subunit protein bL25 (209 aa).

Disordered stretches follow at residues 1–20 (MSKS…KGSS) and 190–209 (LDVS…TQTS). Over residues 8-20 (KAEKRERVGKGSS) the composition is skewed to basic and acidic residues. The segment covering 192–209 (VSDETSEQEKDEGETQTS) has biased composition (acidic residues).

This sequence belongs to the bacterial ribosomal protein bL25 family. CTC subfamily. In terms of assembly, part of the 50S ribosomal subunit; part of the 5S rRNA/L5/L18/L25 subcomplex. Contacts the 5S rRNA. Binds to the 5S rRNA independently of L5 and L18.

Its function is as follows. This is one of the proteins that binds to the 5S RNA in the ribosome where it forms part of the central protuberance. The polypeptide is Large ribosomal subunit protein bL25 (Bartonella tribocorum (strain CIP 105476 / IBS 506)).